Reading from the N-terminus, the 984-residue chain is Putative formate dehydrogenase SAR2393 (984 aa).

The 2Fe-2S ferredoxin-type domain maps to 3–79; that stretch reads EHLVVTLDGK…PMTVNTVNND (77 aa). Cys-37, Cys-48, Cys-51, and Cys-63 together coordinate [2Fe-2S] cluster. One can recognise a 4Fe-4S His(Cys)3-ligated-type domain in the interval 79–119; sequence DVKDAQKEALDRILEKHMLYCTVCDYNNGDCEIHNTMDAWG. His-95, Cys-99, Cys-102, Cys-109, Cys-147, Cys-150, Cys-153, Cys-157, Cys-190, Cys-193, Cys-196, Cys-200, Cys-264, Cys-267, Cys-271, and Cys-299 together coordinate [4Fe-4S] cluster. 4Fe-4S ferredoxin-type domains follow at residues 138–165 and 181–211; these read PFYR…LNET and NDVP…VNME. The tract at residues 252–984 is formate dehydrogenase; sequence MRKERIKKTK…YVFPGNQVDK (733 aa). Residues 257–313 form the 4Fe-4S Mo/W bis-MGD-type domain; that stretch reads IKKTKTVCTYCGVGCSFEVWTKDREILKVQPSHDSPANKIATCVKGKFSWGHINSDQ.

This sequence in the C-terminal section; belongs to the prokaryotic molybdopterin-containing oxidoreductase family. [2Fe-2S] cluster serves as cofactor. Requires [4Fe-4S] cluster as cofactor. Mo-bis(molybdopterin guanine dinucleotide) is required as a cofactor.

The enzyme catalyses formate + NAD(+) = CO2 + NADH. The protein is Putative formate dehydrogenase SAR2393 of Staphylococcus aureus (strain MRSA252).